Reading from the N-terminus, the 753-residue chain is 5-methyltetrahydropteroyltriglutamate--homocysteine methyltransferase (753 aa).

5-methyltetrahydropteroyltri-L-glutamate contacts are provided by residues 17–20 (RELK) and Lys117. Residues 431-433 (IGS) and Glu484 each bind L-homocysteine. Residues 431 to 433 (IGS) and Glu484 each bind L-methionine. 5-methyltetrahydropteroyltri-L-glutamate contacts are provided by residues 515–516 (RC) and Trp561. L-homocysteine is bound at residue Asp599. Position 599 (Asp599) interacts with L-methionine. Glu605 is a binding site for 5-methyltetrahydropteroyltri-L-glutamate. The Zn(2+) site is built by His641, Cys643, and Glu665. His694 functions as the Proton donor in the catalytic mechanism. A Zn(2+)-binding site is contributed by Cys726.

The protein belongs to the vitamin-B12 independent methionine synthase family. It depends on Zn(2+) as a cofactor.

The catalysed reaction is 5-methyltetrahydropteroyltri-L-glutamate + L-homocysteine = tetrahydropteroyltri-L-glutamate + L-methionine. It participates in amino-acid biosynthesis; L-methionine biosynthesis via de novo pathway; L-methionine from L-homocysteine (MetE route): step 1/1. Catalyzes the transfer of a methyl group from 5-methyltetrahydrofolate to homocysteine resulting in methionine formation. The sequence is that of 5-methyltetrahydropteroyltriglutamate--homocysteine methyltransferase from Escherichia coli O8 (strain IAI1).